The chain runs to 876 residues: MAP7 domain-containing protein 3 (876 aa).

3 disordered regions span residues 30–139, 162–200, and 402–438; these read AEER…KFKA, GGVMNADKSGKLENKRSSSLSRKDNRLHPRGDMQHVDNT, and TEAPLQARGESRLEASVEGQPEANVEGSPKNPEIDKR. Positions 39 to 54 are enriched in polar residues; that stretch reads INSSAGANKRSSSTPD. Positions 58 to 136 form a coiled coil; it reads LKNDVKQQLA…KQKQAEDTEK (79 aa). 2 stretches are compositionally biased toward basic and acidic residues: residues 60–139 and 169–196; these read NDVK…KFKA and KSGKLENKRSSSLSRKDNRLHPRGDMQH. 2 positions are modified to phosphoserine: serine 417 and serine 483. Coiled-coil stretches lie at residues 549 to 578 and 626 to 658; these read IQIRHAAYEQSKNEKERLQKEETKQRIARK and SAMMKSRDSAEQRKKEQENILQHWQERLERRKA. Disordered stretches follow at residues 558–683 and 742–783; these read QSKN…EIFP and IQGK…NPNH. Basic and acidic residues-rich tracts occupy residues 559 to 590 and 630 to 659; these read SKNEKERLQKEETKQRIARKPEIMAEKLDKVP and KSRDSAEQRKKEQENILQHWQERLERRKAS. Over residues 665–679 the composition is skewed to acidic residues; the sequence is SEDEADDEGESEDSL. The segment covering 750–763 has biased composition (basic residues); that stretch reads SAKKPPTRPIRSRK. Over residues 771–782 the composition is skewed to polar residues; the sequence is IRPTQSASSNPN.

Belongs to the MAP7 family. In terms of tissue distribution, high expression in lung, skeletal muscle, brain, and kidney, with much weaker expression in spleen, small intestine, liver, and heart.

The protein localises to the cytoplasm. The protein resides in the cytoskeleton. Its subcellular location is the spindle. Its function is as follows. Promotes the assembly and stability of microtubules. This chain is MAP7 domain-containing protein 3 (Map7d3), found in Mus musculus (Mouse).